The sequence spans 189 residues: Thymidylate kinase (189 aa).

ATP is bound at residue 7–14; the sequence is GIDTAGKS.

Belongs to the thymidylate kinase family.

It carries out the reaction dTMP + ATP = dTDP + ADP. Functionally, phosphorylation of dTMP to form dTDP in both de novo and salvage pathways of dTTP synthesis. In Aliarcobacter butzleri (strain RM4018) (Arcobacter butzleri), this protein is Thymidylate kinase.